A 314-amino-acid polypeptide reads, in one-letter code: MPLEQRSQHCKPEEGLEARGEALGLVGAQAPATEEQEAASSSSTLVEVTLGEVPAAESPDPPQSPQGASSLPTTMNYPLWSQSYEDSSNQEEEGPSTFPDLESEFQAALSRKVAELVHFLLLKYRAREPVTKAEMLGSVVGNWQYFFPVIFSKASSSLQLVFGIELMEVDPIGHLYIFATCLGLSYDGLLGDNQIMPKAGLLIIVLAIIAREGDCAPEEKIWEELSVLEVFEGREDSILGDPKKLLTQHFVQENYLEYRQVPGSDPACYEFLWGPRALVETSYVKVLHHMVKISGGPHISYPPLHEWVLREGEE.

The span at 1–20 shows a compositional bias: basic and acidic residues; sequence MPLEQRSQHCKPEEGLEARG. Positions 1-99 are disordered; it reads MPLEQRSQHC…QEEEGPSTFP (99 aa). Over residues 21 to 44 the composition is skewed to low complexity; the sequence is EALGLVGAQAPATEEQEAASSSST. The segment covering 65-87 has biased composition (polar residues); sequence PQGASSLPTTMNYPLWSQSYEDS. Residues 109-308 form the MAGE domain; it reads LSRKVAELVH…ISYPPLHEWV (200 aa).

As to quaternary structure, interacts with TRIM28. Post-translationally, ubiquitinated by the DCX(DCAF12) complex specifically recognizes the diglutamate (Glu-Glu) at the C-terminus, leading to its degradation. Expressed in many tumors of several types, such as melanoma, head and neck squamous cell carcinoma, lung carcinoma and breast carcinoma, but not in normal tissues except for testes and placenta. Never expressed in kidney tumors, Leukemias and lymphomas.

Its function is as follows. Activator of ubiquitin ligase activity of RING-type zinc finger-containing E3 ubiquitin-protein ligases that acts as a repressor of autophagy. May enhance ubiquitin ligase activity of TRIM28 and stimulate p53/TP53 ubiquitination by TRIM28. Proposed to act through recruitment and/or stabilization of the Ubl-conjugating enzyme (E2) at the E3:substrate complex. May play a role in embryonal development and tumor transformation or aspects of tumor progression. In vitro promotes cell viability in melanoma cell lines. Antigen recognized on a melanoma by autologous cytolytic T-lymphocytes. The protein is Melanoma-associated antigen 3 of Homo sapiens (Human).